The sequence spans 447 residues: Tubulin beta chain (447 aa).

Positions 11, 69, 138, 142, 143, 144, 204, and 226 each coordinate GTP. Residue Glu69 coordinates Mg(2+). The disordered stretch occupies residues 424-447; sequence QYQEARSTDSDEYDNEEYYNQQEE. The segment covering 433–447 has biased composition (acidic residues); the sequence is SDEYDNEEYYNQQEE.

Belongs to the tubulin family. Dimer of alpha and beta chains. A typical microtubule is a hollow water-filled tube with an outer diameter of 25 nm and an inner diameter of 15 nM. Alpha-beta heterodimers associate head-to-tail to form protofilaments running lengthwise along the microtubule wall with the beta-tubulin subunit facing the microtubule plus end conferring a structural polarity. Microtubules usually have 13 protofilaments but different protofilament numbers can be found in some organisms and specialized cells. Mg(2+) serves as cofactor. As to expression, lens specific.

It is found in the cytoplasm. The protein resides in the cytoskeleton. Its function is as follows. Tubulin is the major constituent of microtubules, a cylinder consisting of laterally associated linear protofilaments composed of alpha- and beta-tubulin heterodimers. Microtubules grow by the addition of GTP-tubulin dimers to the microtubule end, where a stabilizing cap forms. Below the cap, tubulin dimers are in GDP-bound state, owing to GTPase activity of alpha-tubulin. This Enteroctopus dofleini (North Pacific giant octopus) protein is Tubulin beta chain.